The chain runs to 377 residues: Dehydrogenase/reductase SDR family member 13 (377 aa).

Positions 1–25 (MEALLLGAGLLLGAYVLVYYNLVKA) are cleaved as a signal peptide. 2 residues coordinate NAD(+): serine 46 and isoleucine 48. Residue serine 170 participates in substrate binding. Residues tyrosine 197, lysine 201, and serine 232 each coordinate NAD(+). Residue tyrosine 197 is the Proton acceptor of the active site. A disordered region spans residues 309–377 (RLAGLGPGED…AKVEPEIQLS (69 aa)). The span at 317-331 (EDAEPDEDPQSEDSE) shows a compositional bias: acidic residues. Over residues 347-357 (SQPYPSPQSSP) the composition is skewed to low complexity. The span at 368–377 (AKVEPEIQLS) shows a compositional bias: basic and acidic residues.

This sequence belongs to the short-chain dehydrogenases/reductases (SDR) family.

The protein localises to the secreted. Functionally, putative oxidoreductase. In Homo sapiens (Human), this protein is Dehydrogenase/reductase SDR family member 13.